The primary structure comprises 936 residues: Isoleucine--tRNA ligase (936 aa).

A 'HIGH' region motif is present at residues 58–68 (PYANGNIHIGH). Glutamate 560 contacts L-isoleucyl-5'-AMP. The 'KMSKS' region signature appears at 601–605 (KMSKS). Lysine 604 lines the ATP pocket. Zn(2+)-binding residues include cysteine 899, cysteine 902, cysteine 919, and cysteine 922.

The protein belongs to the class-I aminoacyl-tRNA synthetase family. IleS type 1 subfamily. As to quaternary structure, monomer. It depends on Zn(2+) as a cofactor.

The protein resides in the cytoplasm. The catalysed reaction is tRNA(Ile) + L-isoleucine + ATP = L-isoleucyl-tRNA(Ile) + AMP + diphosphate. Its function is as follows. Catalyzes the attachment of isoleucine to tRNA(Ile). As IleRS can inadvertently accommodate and process structurally similar amino acids such as valine, to avoid such errors it has two additional distinct tRNA(Ile)-dependent editing activities. One activity is designated as 'pretransfer' editing and involves the hydrolysis of activated Val-AMP. The other activity is designated 'posttransfer' editing and involves deacylation of mischarged Val-tRNA(Ile). The protein is Isoleucine--tRNA ligase of Proteus mirabilis (strain HI4320).